The sequence spans 421 residues: Extracellular signal-regulated kinase 1 (421 aa).

In terms of domain architecture, Protein kinase spans 70 to 375 (YQILEIVGEG…VEDALKHPYL (306 aa)). ATP contacts are provided by residues 76-84 (VGEGAYGIV) and Lys-99. Asp-194 functions as the Proton acceptor in the catalytic mechanism. Thr-230 bears the Phosphothreonine mark. Residues 230–232 (TEY) carry the TXY motif. Tyr-232 carries the post-translational modification Phosphotyrosine.

The protein belongs to the protein kinase superfamily. CMGC Ser/Thr protein kinase family. MAP kinase subfamily. It depends on Mg(2+) as a cofactor. Dually phosphorylated on Thr-230 and Tyr-232, which activates the enzyme.

The catalysed reaction is L-seryl-[protein] + ATP = O-phospho-L-seryl-[protein] + ADP + H(+). It catalyses the reaction L-threonyl-[protein] + ATP = O-phospho-L-threonyl-[protein] + ADP + H(+). Activated by tyrosine and threonine phosphorylation. This Candida albicans (strain SC5314 / ATCC MYA-2876) (Yeast) protein is Extracellular signal-regulated kinase 1 (CEK1).